A 306-amino-acid chain; its full sequence is Protein FAM228A (306 aa).

Residues 237–277 form a disordered region; sequence HASKLSQQNKGAEKKGLALGTRAQRPRSWAAADSPQGTPLV. Phosphoserine is present on S270.

Belongs to the FAM228 family.

The polypeptide is Protein FAM228A (Fam228a) (Rattus norvegicus (Rat)).